We begin with the raw amino-acid sequence, 902 residues long: MDLTDDSPDGEVKIHKKDFHHPYTPYPIQEKFMQTVYDVLEQGKIGILESPTGTGKSLSLICGSLTWLRDFKRKEFEGILNDGFENSEEPEWMIEAAKVRKKRELIGRREEMERKLGRIRERERCERDRMSGNGNGNMRGGKRRKVGGDGEGDLVGGSNGSNEDEFLLEDWESDGEIGGSGKKKTGDEAIFSKETLELKKSIGMWKFPSPMPLEEFPSKTTEKDKDNLHEHLRHLPLGSRKNLCINPKVNKLNSVTAINERCAELQQSSTPKEHKCPHLPNKDNKPLVSTFRDHALATIRDIEDMGALGKEISICPYYASRSAIKPAEIVTLPYPLLLQKSAREALGISLKGHVVIIDEAHNLMDAIAGIYGTEMSLKELKLAKEMLGNYFMKFAKRLKGKNRIYVAQAIRVVDSLMGYLMKRLEGTEIDGVVDQKELLAGKGADQIDLFKLIRYLQESKLARKVESYTEHTRNIKQASTIPHNNKETPKSTTPILHTLTSLLLALTHPTTEGQLFFLKSTSTSPSPSPDLITLKFQLLNPAPHFESIVSSARAIILAGGTMSPFSDYTSILFPSIPSHKITTLSCGHVIPKTHLFASTVSRGPTGIPFKWTFANRGNTDMMDELGRVLLNVCTIVPDGVVVFFPSYNFLSTILYRFSIPSSGTGSATATATGTEKGKGKTILERLSEKKPIFQESKEESVETILAAYAKSIAEGKGALLFSVVGGKLSEGINFSDALGRCVMIVGLPFPNMHTAEWKRRLRFIEESAVERLTSFYQEKESNNKDGNGNEEEGNGKKKENREKIQRDQILQQAKGEARDYFENVCMRAVNQCVGRAIRHRGDWAGILLLDERYKGERVVGKLAGWIREGVLRGEGMGMGDAGGFGRLMGGLGRFCRGRREVL.

The Helicase ATP-binding domain maps to histidine 15–aspartate 414. Serine 50–serine 57 lines the ATP pocket. Residues aspartate 128 to asparagine 162 are disordered. Residues cysteine 244, cysteine 262, cysteine 276, and cysteine 315 each coordinate [4Fe-4S] cluster. Residues aspartate 358–histidine 361 carry the DEAH box motif. The interval phenylalanine 775–isoleucine 804 is disordered. Residues glycine 793 to isoleucine 804 are compositionally biased toward basic and acidic residues.

It belongs to the DEAD box helicase family. DEAH subfamily. DDX11/CHL1 sub-subfamily. Requires [4Fe-4S] cluster as cofactor.

It is found in the nucleus. The enzyme catalyses Couples ATP hydrolysis with the unwinding of duplex DNA at the replication fork by translocating in the 5'-3' direction. This creates two antiparallel DNA single strands (ssDNA). The leading ssDNA polymer is the template for DNA polymerase III holoenzyme which synthesizes a continuous strand.. The catalysed reaction is ATP + H2O = ADP + phosphate + H(+). Functionally, ATP-dependent DNA helicase important for chromosome transmission and normal cell cycle progression in G(2)/M. May have a role in changing DNA topology to allow the loading of proteins involved in maintaining sister chromatid cohesion in the vicinity of the centromeres. Has a specific role in chromosome segregation during meiosis II. The protein is ATP-dependent DNA helicase CHL1 (CHL1) of Sclerotinia sclerotiorum (strain ATCC 18683 / 1980 / Ss-1) (White mold).